We begin with the raw amino-acid sequence, 387 residues long: Oxidase FUB9 (387 aa).

The tract at residues 1–20 is disordered; that stretch reads MSRTNLPIQPAKMSDATSSK. One can recognise an FMN hydroxy acid dehydrogenase domain in the interval 18–379; sequence SSKPQIFSIQ…TPAHLSILNA (362 aa). Tyr-44 lines the a 2-oxocarboxylate pocket. FMN contacts are provided by Ser-126, Gln-150, and Thr-178. Arg-187 serves as a coordination point for a 2-oxocarboxylate. An FMN-binding site is contributed by Lys-250. His-274 (proton acceptor) is an active-site residue. Arg-277 provides a ligand contact to a 2-oxocarboxylate. FMN is bound by residues 305-309 and 328-329; these read DGGFR and GR.

It belongs to the FMN-dependent alpha-hydroxy acid dehydrogenase family. It depends on FMN as a cofactor.

It functions in the pathway mycotoxin biosynthesis. Functionally, oxidase; part of the gene cluster that mediates the biosynthesis of fusaric acid, a mycotoxin with low to moderate toxicity to animals and humans, but with high phytotoxic properties. L-aspartate is suggested as fusaric acid amino acid precursor that is activated and further processed to O-acetyl-L-homoserine by cluster enzymes aspartate kinase FUB3 and homoserine O-acetyltransferase FUB5, as well as enzymes of the primary metabolism. The polyketide synthase (PKS) FUB1 generates the triketide trans-2-hexenal which is presumptively released by the hydrolase FUB4 and linked to the NRPS-bound amino acid precursor by NAD(P)-dependent dehydrogenase FUB6. FUB1, FUB4, and the non-canonical NRPS Fub8 may form an enzyme complex. Further processing of the NRPS-bound intermediate might be carried out by FUB6 and the sulfhydrylase FUB7, enabling a spontaneous electrocyclization to close the carbon backbone of fusaric acid. Dihydrofusaric acid is likely to be released via reduction by the thioester reductase (TR) domain of FUB8 whereupon the final oxidation to fusaric acid may (also) be performed by the FMN-dependent dehydrogenase FUB9. The polypeptide is Oxidase FUB9 (Fusarium oxysporum f. sp. lycopersici (strain 4287 / CBS 123668 / FGSC 9935 / NRRL 34936) (Fusarium vascular wilt of tomato)).